Here is a 411-residue protein sequence, read N- to C-terminus: Serine hydroxymethyltransferase (411 aa).

(6S)-5,6,7,8-tetrahydrofolate-binding positions include Leu-119 and 123–125 (GHL). At Lys-228 the chain carries N6-(pyridoxal phosphate)lysine. 351 to 353 (SPF) contacts (6S)-5,6,7,8-tetrahydrofolate.

This sequence belongs to the SHMT family. In terms of assembly, homodimer. The cofactor is pyridoxal 5'-phosphate.

The protein localises to the cytoplasm. It carries out the reaction (6R)-5,10-methylene-5,6,7,8-tetrahydrofolate + glycine + H2O = (6S)-5,6,7,8-tetrahydrofolate + L-serine. It functions in the pathway one-carbon metabolism; tetrahydrofolate interconversion. Its pathway is amino-acid biosynthesis; glycine biosynthesis; glycine from L-serine: step 1/1. Its function is as follows. Catalyzes the reversible interconversion of serine and glycine with tetrahydrofolate (THF) serving as the one-carbon carrier. This reaction serves as the major source of one-carbon groups required for the biosynthesis of purines, thymidylate, methionine, and other important biomolecules. Also exhibits THF-independent aldolase activity toward beta-hydroxyamino acids, producing glycine and aldehydes, via a retro-aldol mechanism. The protein is Serine hydroxymethyltransferase of Clostridium novyi (strain NT).